The following is an 85-amino-acid chain: uncharacterized protein (85 aa).

The segment at 44–85 (EAHPSEHNGTVPRSLSQEWAKILAEEAEENSEENNDESEEDN) is disordered. The span at 50 to 60 (HNGTVPRSLSQ) shows a compositional bias: polar residues. Over residues 68–85 (EEAEENSEENNDESEEDN) the composition is skewed to acidic residues.

This is an uncharacterized protein from Haloarcula hispanica (His1V).